Consider the following 564-residue polypeptide: Dihydroxy-acid dehydratase (564 aa).

Cys-55 contributes to the [2Fe-2S] cluster binding site. Asp-87 is a Mg(2+) binding site. Cys-128 contributes to the [2Fe-2S] cluster binding site. Residues Asp-129 and Lys-130 each contribute to the Mg(2+) site. Position 130 is an N6-carboxylysine (Lys-130). Cys-200 provides a ligand contact to [2Fe-2S] cluster. Residue Glu-452 coordinates Mg(2+). Ser-478 acts as the Proton acceptor in catalysis.

The protein belongs to the IlvD/Edd family. As to quaternary structure, homodimer. Requires [2Fe-2S] cluster as cofactor. Mg(2+) serves as cofactor.

The enzyme catalyses (2R)-2,3-dihydroxy-3-methylbutanoate = 3-methyl-2-oxobutanoate + H2O. It catalyses the reaction (2R,3R)-2,3-dihydroxy-3-methylpentanoate = (S)-3-methyl-2-oxopentanoate + H2O. It participates in amino-acid biosynthesis; L-isoleucine biosynthesis; L-isoleucine from 2-oxobutanoate: step 3/4. The protein operates within amino-acid biosynthesis; L-valine biosynthesis; L-valine from pyruvate: step 3/4. In terms of biological role, functions in the biosynthesis of branched-chain amino acids. Catalyzes the dehydration of (2R,3R)-2,3-dihydroxy-3-methylpentanoate (2,3-dihydroxy-3-methylvalerate) into 2-oxo-3-methylpentanoate (2-oxo-3-methylvalerate) and of (2R)-2,3-dihydroxy-3-methylbutanoate (2,3-dihydroxyisovalerate) into 2-oxo-3-methylbutanoate (2-oxoisovalerate), the penultimate precursor to L-isoleucine and L-valine, respectively. The polypeptide is Dihydroxy-acid dehydratase (Polaromonas sp. (strain JS666 / ATCC BAA-500)).